A 445-amino-acid chain; its full sequence is Competence protein E (445 aa).

The first 23 residues, 1–23 (MKKYFLKCGYFLVCFCLPLIVFA), serve as a signal peptide directing secretion.

This sequence belongs to the bacterial secretin family. PilQ subfamily.

The protein localises to the cell outer membrane. Its function is as follows. Involved in transformation (genetic competence for DNA uptake). The protein is Competence protein E (comE) of Haemophilus influenzae (strain ATCC 51907 / DSM 11121 / KW20 / Rd).